The chain runs to 247 residues: Cell division protein ZapD (247 aa).

This sequence belongs to the ZapD family. In terms of assembly, interacts with FtsZ.

The protein resides in the cytoplasm. Functionally, cell division factor that enhances FtsZ-ring assembly. Directly interacts with FtsZ and promotes bundling of FtsZ protofilaments, with a reduction in FtsZ GTPase activity. The sequence is that of Cell division protein ZapD from Shigella flexneri.